A 622-amino-acid chain; its full sequence is Modification methylase LlaI (622 aa).

This sequence belongs to the N(4)/N(6)-methyltransferase family.

The enzyme catalyses a 2'-deoxyadenosine in DNA + S-adenosyl-L-methionine = an N(6)-methyl-2'-deoxyadenosine in DNA + S-adenosyl-L-homocysteine + H(+). Functionally, an alpha subtype methylase that modifies unknown specific adenine residues, and protects the DNA from cleavage by the LlaI endonuclease. The sequence is that of Modification methylase LlaI from Lactococcus lactis subsp. lactis (Streptococcus lactis).